The primary structure comprises 603 residues: Pyruvate oxidase (603 aa).

The core stretch occupies residues 1–191; the sequence is MVMKQTKQTN…WYASANSYQT (191 aa). The interval 192–342 is FAD-binding; sequence PLLPEPDVQA…ILAQVSERES (151 aa). Positions 343 to 603 are thiamine pyrophosphate binding; it reads TPWWQANLAN…LQHQIGQGGF (261 aa). Residues D447, N474, and Q476 each coordinate Mg(2+).

The protein belongs to the TPP enzyme family. Homotetramer. It depends on FAD as a cofactor. Requires Mg(2+) as cofactor. The cofactor is thiamine diphosphate.

It carries out the reaction pyruvate + phosphate + O2 + H(+) = acetyl phosphate + H2O2 + CO2. In terms of biological role, important for the aerobic growth. Decarboxylates pyruvate in four steps. The energy released is partially stored in acetyl phosphate. In Lactiplantibacillus plantarum (strain ATCC BAA-793 / NCIMB 8826 / WCFS1) (Lactobacillus plantarum), this protein is Pyruvate oxidase (pox5).